Reading from the N-terminus, the 426-residue chain is MTEIVDIIAREILDSRGNPTVEVDVILEDGAFGRAAVPSGASTGAHEANEKRDGDKARYLGKGVQQAVDAVNGEIFDALSGVDAEDQRRVDNLMIELDGTPNKARLGANAILGVSLATAKAAAESAGLPLYKYVGGVNARVLPTPMMNIINGGAHADNPIDIQEFMILPTGAKDFREGLRMGAEIFHALKKALKDAGHNTNVGDEGGFAPNLASAEAALDFIVKAGEKAGYKAGDDFVLGLDVASTEFFKNGKYELEGEGKSLDPAAMVDYLAGLVAKFPILTIEDGMAEDDFDGWKLLTDTLGKKVQLVGDDLFVTNPKRLQMGLDKGLANSILVKVNQIGTLSETIDAVELAHRHGYTSVMSHRSGETEDSTIADLAVALNCGQIKTGSLARSDRTAKYNQLLRIQEMLDDQGVYAGRAALKGR.

Gln-163 is a (2R)-2-phosphoglycerate binding site. Glu-205 acts as the Proton donor in catalysis. Mg(2+) is bound by residues Asp-242, Glu-285, and Asp-312. Lys-337, Arg-366, Ser-367, and Lys-388 together coordinate (2R)-2-phosphoglycerate. Lys-337 functions as the Proton acceptor in the catalytic mechanism.

This sequence belongs to the enolase family. It depends on Mg(2+) as a cofactor.

It is found in the cytoplasm. It localises to the secreted. The protein localises to the cell surface. It catalyses the reaction (2R)-2-phosphoglycerate = phosphoenolpyruvate + H2O. Its pathway is carbohydrate degradation; glycolysis; pyruvate from D-glyceraldehyde 3-phosphate: step 4/5. Catalyzes the reversible conversion of 2-phosphoglycerate (2-PG) into phosphoenolpyruvate (PEP). It is essential for the degradation of carbohydrates via glycolysis. The sequence is that of Enolase from Caulobacter vibrioides (strain ATCC 19089 / CIP 103742 / CB 15) (Caulobacter crescentus).